Reading from the N-terminus, the 191-residue chain is dTTP/UTP pyrophosphatase (191 aa).

Residue Asp71 is the Proton acceptor of the active site.

The protein belongs to the Maf family. YhdE subfamily. Requires a divalent metal cation as cofactor.

Its subcellular location is the cytoplasm. It catalyses the reaction dTTP + H2O = dTMP + diphosphate + H(+). The catalysed reaction is UTP + H2O = UMP + diphosphate + H(+). Functionally, nucleoside triphosphate pyrophosphatase that hydrolyzes dTTP and UTP. May have a dual role in cell division arrest and in preventing the incorporation of modified nucleotides into cellular nucleic acids. This chain is dTTP/UTP pyrophosphatase, found in Geobacter sulfurreducens (strain ATCC 51573 / DSM 12127 / PCA).